Consider the following 71-residue polypeptide: Translation initiation factor IF-1 (71 aa).

In terms of domain architecture, S1-like spans 1 to 71; the sequence is MAKQAAIEQD…LTKARITYRY (71 aa).

The protein belongs to the IF-1 family. As to quaternary structure, component of the 30S ribosomal translation pre-initiation complex which assembles on the 30S ribosome in the order IF-2 and IF-3, IF-1 and N-formylmethionyl-tRNA(fMet); mRNA recruitment can occur at any time during PIC assembly.

It localises to the cytoplasm. Functionally, one of the essential components for the initiation of protein synthesis. Stabilizes the binding of IF-2 and IF-3 on the 30S subunit to which N-formylmethionyl-tRNA(fMet) subsequently binds. Helps modulate mRNA selection, yielding the 30S pre-initiation complex (PIC). Upon addition of the 50S ribosomal subunit IF-1, IF-2 and IF-3 are released leaving the mature 70S translation initiation complex. The chain is Translation initiation factor IF-1 from Christiangramia forsetii (strain DSM 17595 / CGMCC 1.15422 / KT0803) (Gramella forsetii).